Here is a 972-residue protein sequence, read N- to C-terminus: Cycloisomaltooligosaccharide glucanotransferase (972 aa).

Positions 1–38 are cleaved as a signal peptide; sequence MVRFMYALRKRRLSLLLAMSLLVMCVASVVSPPPQALA. CBM6 domains follow at residues 421-546 and 748-871; these read TRYE…LTLG and DIYE…LDLD.

It belongs to the glycosyl hydrolase 66 family. As to quaternary structure, monomer.

It carries out the reaction cyclizes part of a (1-&gt;6)-alpha-D-glucan chain by formation of a (1-&gt;6)-alpha-D-glucosidic bond.. Produces cycloisomaltooligosaccharide from dextran containing 7, 8 or 9 glucose units. The enzyme is specific for (1-&gt;6)-alpha-D-glucans (dextrans) and, without activity toward (1-&gt;4)-alpha-D-glucans, such as amylose. It also has no activity on oligosaccharides, such as amylopectin and pullulan, containing (1-&gt;6)-alpha-D-glucosidic linkages at branch points. This Niallia circulans (Bacillus circulans) protein is Cycloisomaltooligosaccharide glucanotransferase.